The chain runs to 469 residues: Neuraminidase (469 aa).

The Intravirion portion of the chain corresponds to 1–6 (MNPNQK). A helical transmembrane segment spans residues 7–27 (IITIGSICMVIGIVSLMLQIG). An involved in apical transport and lipid raft association region spans residues 11–33 (GSICMVIGIVSLMLQIGNIISIW). The Virion surface portion of the chain corresponds to 28–469 (NIISIWVSHS…GAELPFTIDK (442 aa)). A hypervariable stalk region region spans residues 36-90 (HSIQTGNQHQAEPCNQSIITYENNTWVNQTYVNISNTNFLTEKAVASVTLAGNSS). 5 N-linked (GlcNAc...) asparagine; by host glycosylation sites follow: Asn50, Asn58, Asn63, Asn68, and Asn88. Residues 91-469 (LCPISGWAVY…GAELPFTIDK (379 aa)) are head of neuraminidase. Cystine bridges form between Cys92–Cys417, Cys124–Cys129, Cys184–Cys231, Cys233–Cys238, Cys279–Cys292, Cys281–Cys290, Cys318–Cys335, and Cys421–Cys446. Arg118 contacts substrate. N-linked (GlcNAc...) asparagine; by host glycosylation is present at Asn146. Asp151 functions as the Proton donor/acceptor in the catalytic mechanism. Position 152 (Arg152) interacts with substrate. N-linked (GlcNAc...) asparagine; by host glycosylation is present at Asn235. 277–278 (EE) lines the substrate pocket. Arg293 provides a ligand contact to substrate. The Ca(2+) site is built by Asp294, Gly298, and Asp324. Arg368 serves as a coordination point for substrate. Asn386 carries N-linked (GlcNAc...) asparagine; by host glycosylation. Tyr402 serves as the catalytic Nucleophile.

This sequence belongs to the glycosyl hydrolase 34 family. As to quaternary structure, homotetramer. Ca(2+) serves as cofactor. Post-translationally, N-glycosylated.

Its subcellular location is the virion membrane. It localises to the host apical cell membrane. It catalyses the reaction Hydrolysis of alpha-(2-&gt;3)-, alpha-(2-&gt;6)-, alpha-(2-&gt;8)- glycosidic linkages of terminal sialic acid residues in oligosaccharides, glycoproteins, glycolipids, colominic acid and synthetic substrates.. Its activity is regulated as follows. Inhibited by the neuraminidase inhibitors zanamivir (Relenza) and oseltamivir (Tamiflu). These drugs interfere with the release of progeny virus from infected cells and are effective against all influenza strains. Resistance to neuraminidase inhibitors is quite rare. In terms of biological role, catalyzes the removal of terminal sialic acid residues from viral and cellular glycoconjugates. Cleaves off the terminal sialic acids on the glycosylated HA during virus budding to facilitate virus release. Additionally helps virus spread through the circulation by further removing sialic acids from the cell surface. These cleavages prevent self-aggregation and ensure the efficient spread of the progeny virus from cell to cell. Otherwise, infection would be limited to one round of replication. Described as a receptor-destroying enzyme because it cleaves a terminal sialic acid from the cellular receptors. May facilitate viral invasion of the upper airways by cleaving the sialic acid moieties on the mucin of the airway epithelial cells. Likely to plays a role in the budding process through its association with lipid rafts during intracellular transport. May additionally display a raft-association independent effect on budding. Plays a role in the determination of host range restriction on replication and virulence. Sialidase activity in late endosome/lysosome traffic seems to enhance virus replication. This chain is Neuraminidase, found in Aves (Cat).